The following is a 455-amino-acid chain: MKSVEDLEDKNVLVLGMAKSGISAALLLHRLRANVLVNDANANQPQELIEKLENKGIRMVLGEHPTNILSQNKIELIVKNPGIPYTNPVLVDAQARGIKIVSEPELAYWVMDSELIGVTGSNGKTTVTTLIQLMLDDNKKHAYVAGNIGVPATTVAQKATAEDKIVMELSSFMLAGIDRLHPHIAVLNNIFASHLDWHKTRENYVNDKMNITKNQTKDDFLVINWDNTEWQELAKRTQAKVVPFSRQGLTKSGAYEIEGKLYFKDELIMEADEIGIPGEQNVENALAAIAVAKIEKVSTAHIKQVLTTFGGVKHRIQYVENLNGRQFYNDSKATDIEATQVALRSFKKPVILIAGGLDRHDDLDRLIPDLEPNVKEVIVNGETAEKFKKIAQKAGISVIKDSSRVSESVEIAYQDSKEGDIILLSPAAASWDQYKTFEERGDEFIAAVQNLHKGE.

120-126 (GSNGKTT) contributes to the ATP binding site.

The protein belongs to the MurCDEF family.

It localises to the cytoplasm. The enzyme catalyses UDP-N-acetyl-alpha-D-muramoyl-L-alanine + D-glutamate + ATP = UDP-N-acetyl-alpha-D-muramoyl-L-alanyl-D-glutamate + ADP + phosphate + H(+). It participates in cell wall biogenesis; peptidoglycan biosynthesis. Cell wall formation. Catalyzes the addition of glutamate to the nucleotide precursor UDP-N-acetylmuramoyl-L-alanine (UMA). This Pediococcus pentosaceus (strain ATCC 25745 / CCUG 21536 / LMG 10740 / 183-1w) protein is UDP-N-acetylmuramoylalanine--D-glutamate ligase.